Consider the following 272-residue polypeptide: Undecaprenyl-diphosphatase (272 aa).

7 consecutive transmembrane segments (helical) span residues phenylalanine 2–isoleucine 22, phenylalanine 43–tyrosine 63, tryptophan 82–leucine 102, leucine 110–leucine 130, tyrosine 185–leucine 205, valine 224–leucine 244, and phenylalanine 252–isoleucine 272.

This sequence belongs to the UppP family.

It localises to the cell membrane. It carries out the reaction di-trans,octa-cis-undecaprenyl diphosphate + H2O = di-trans,octa-cis-undecaprenyl phosphate + phosphate + H(+). Catalyzes the dephosphorylation of undecaprenyl diphosphate (UPP). Confers resistance to bacitracin. This is Undecaprenyl-diphosphatase from Lacticaseibacillus paracasei (strain ATCC 334 / BCRC 17002 / CCUG 31169 / CIP 107868 / KCTC 3260 / NRRL B-441) (Lactobacillus paracasei).